A 132-amino-acid polypeptide reads, in one-letter code: Agouti-signaling protein (132 aa).

Residues 1-22 (MDVTRLLLATLLVFLCFFTVYS) form the signal peptide. An N-linked (GlcNAc...) asparagine glycan is attached at Asn-39. Positions 61 to 87 (HISRKEAEKKRSSKKEASMKKVARPRT) are disordered. Over residues 64–79 (RKEAEKKRSSKKEASM) the composition is skewed to basic and acidic residues. 5 cysteine pairs are disulfide-bonded: Cys-93/Cys-108, Cys-100/Cys-114, Cys-107/Cys-125, Cys-111/Cys-132, and Cys-116/Cys-123. Residues 93-132 (CVATRDSCKPPAPACCDPCASCQCRFFRSACSCRVLSLNC) form the Agouti domain.

It localises to the secreted. Its function is as follows. Involved in the regulation of melanogenesis. The binding of ASP to MC1R precludes alpha-MSH initiated signaling and thus blocks production of cAMP, leading to a down-regulation of eumelanogenesis (brown/black pigment) and thus increasing synthesis of pheomelanin (yellow/red pigment). This Colobus polykomos (Western black-and-white colobus monkey) protein is Agouti-signaling protein (ASIP).